The following is a 796-amino-acid chain: Protocadherin beta-3 (796 aa).

Residues 1–26 form the signal peptide; the sequence is MEAGGERFLRQRQVLLLFVFLGGSLA. Topologically, residues 27–690 are extracellular; that stretch reads GSESRRYSVA…AQADLLTVYL (664 aa). 5 Cadherin domains span residues 35 to 133, 138 to 242, 247 to 347, 352 to 451, and 456 to 561; these read VAEE…SPVF, MHLK…APEF, YEVA…PPEL, VNSP…APAF, and YTLF…SPFV. An N-linked (GlcNAc...) asparagine glycan is attached at Asn-169. Residues Asn-418 and Asn-436 are each glycosylated (N-linked (GlcNAc...) asparagine). N-linked (GlcNAc...) asparagine glycosylation occurs at Asn-567. The Cadherin 6 domain maps to 568–671; that stretch reads GSAPCTELVP…LVDGFSQPYL (104 aa). The chain crosses the membrane as a helical span at residues 691–711; the sequence is VVALASVSSLFLFSVLLFVAV. Residues 712 to 796 lie on the Cytoplasmic side of the membrane; sequence RLCRRSRAAS…PSFRKSFEFS (85 aa).

Its subcellular location is the cell membrane. In terms of biological role, potential calcium-dependent cell-adhesion protein. May be involved in the establishment and maintenance of specific neuronal connections in the brain. The chain is Protocadherin beta-3 (PCDHB3) from Homo sapiens (Human).